A 315-amino-acid chain; its full sequence is Ribosomal RNA small subunit methyltransferase H (315 aa).

S-adenosyl-L-methionine is bound by residues 33-35 (AGH), Asp53, Phe80, Asp101, and Gln108.

This sequence belongs to the methyltransferase superfamily. RsmH family.

It localises to the cytoplasm. The enzyme catalyses cytidine(1402) in 16S rRNA + S-adenosyl-L-methionine = N(4)-methylcytidine(1402) in 16S rRNA + S-adenosyl-L-homocysteine + H(+). Functionally, specifically methylates the N4 position of cytidine in position 1402 (C1402) of 16S rRNA. The sequence is that of Ribosomal RNA small subunit methyltransferase H from Natranaerobius thermophilus (strain ATCC BAA-1301 / DSM 18059 / JW/NM-WN-LF).